The primary structure comprises 670 residues: Solute carrier organic anion transporter family member 1A5 (670 aa).

Over 1 to 20 (MGETEKRIATHGVRCFSKIK) the chain is Cytoplasmic. A helical transmembrane segment spans residues 21 to 40 (MFLLALTCAYVSKSLSGIYM). The Extracellular segment spans residues 41–59 (NSMLTQIERQFDIPTSIVG). A helical transmembrane segment spans residues 60 to 80 (LINGSFEIGNLLLIILVSYFG). The Cytoplasmic portion of the chain corresponds to 81–86 (TKLHRP). Residues 87–111 (IMIGIGCVIMGLGCFLMSLPHFLMG) form a helical membrane-spanning segment. Topologically, residues 112-155 (RYEYETTISPTSNLSSNSFLCMENRTQTLKPTQDPAECVKEMKS) are extracellular. N-linked (GlcNAc...) asparagine glycosylation is found at Asn124 and Asn135. The chain crosses the membrane as a helical span at residues 156-184 (LMWIYVLVGNIIRGIGETPIMPLGISYIE). At 185-203 (DFAKSENSPLYIGILESGK) the chain is on the cytoplasmic side. The helical transmembrane segment at 204-224 (MIGPIVGLLLGSFCARIYVDT) threads the bilayer. The Extracellular portion of the chain corresponds to 225–242 (GSVNTDDLTITPTDTRWV). The chain crosses the membrane as a helical span at residues 243–267 (GAWWIGFLVCAGVNILTSIPFFFFP). The Cytoplasmic portion of the chain corresponds to 268–311 (KTLPKEGLQDNVARTENDKEEKHREKAKEENRGITKDFLPFMKS). The helical transmembrane segment at 312 to 333 (LSCNPIYMLLILTSVLQINAFI) threads the bilayer. Residues 334–353 (NMFTFLPKYLEQQYGKSTSE) lie on the Extracellular side of the membrane. The chain crosses the membrane as a helical span at residues 354-377 (VVLLIGVCNLPPICIGYLLIGFIM). Topologically, residues 378–381 (KKFR) are cytoplasmic. The helical transmembrane segment at 382–405 (ITVKKAAYMAFCLSLFEYLLSYFH) threads the bilayer. At 406–513 (FMISCDNFQV…PECANKLQYF (108 aa)) the chain is on the extracellular side. Positions 433 to 488 (NKVLADCNTRCSCLTNTWDPVCGDNGLSYMSACLAGCEKSVGMGTHMVFQNCSCIQ) constitute a Kazal-like domain. 3 cysteine pairs are disulfide-bonded: Cys439–Cys469, Cys445–Cys465, and Cys454–Cys486. 2 N-linked (GlcNAc...) asparagine glycosylation sites follow: Asn483 and Asn492. A helical membrane pass occupies residues 514-536 (LIMSVIGSFIYSITAIPGYMVLL). Residues 537-545 (RCIKSEEKS) are Cytoplasmic-facing. The chain crosses the membrane as a helical span at residues 546–571 (LGIGLHAFCTRIFAGIPAPIYFGALI). At 572-605 (DRTCLHWGTLKCGEPGACRIYNINNFRRIYLVLP) the chain is on the extracellular side. The helical transmembrane segment at 606–623 (AALRGSSYLPAFFILILM) threads the bilayer. The Cytoplasmic segment spans residues 624–670 (RKFQLPGEMYSSETELADMKQTVKKSECTDVHGIPKVENDGELKTKL).

The protein belongs to the organo anion transporter (TC 2.A.60) family. As to expression, expressed in brain, choroid plexus and lung, but not in liver or kidney.

It is found in the cell membrane. Its subcellular location is the basal cell membrane. The catalysed reaction is taurocholate(out) = taurocholate(in). The enzyme catalyses glycocholate(out) = glycocholate(in). It catalyses the reaction taurochenodeoxycholate(out) = taurochenodeoxycholate(in). It carries out the reaction tauroursodeoxycholate(out) = tauroursodeoxycholate(in). The catalysed reaction is 3,3',5'-triiodo-L-thyronine(out) = 3,3',5'-triiodo-L-thyronine(in). The enzyme catalyses L-thyroxine(out) = L-thyroxine(in). It catalyses the reaction taurodeoxycholate(out) = taurodeoxycholate(in). It carries out the reaction glycodeoxycholate(out) = glycodeoxycholate(in). The catalysed reaction is glycochenodeoxycholate(out) = glycochenodeoxycholate(in). The enzyme catalyses glycoursodeoxycholate(out) = glycoursodeoxycholate(in). It catalyses the reaction estrone 3-sulfate(out) = estrone 3-sulfate(in). It carries out the reaction prostaglandin E2(out) = prostaglandin E2(in). The catalysed reaction is substance P(out) = substance P(in). Functionally, na(+)-independent transporter that mediates the cellular uptake of a broad range of organic anions such as the endogenous bile salts cholate and deoxycholate, either in their unconjugated or conjugated forms (taurocholate and glycocholate), estrone 3-sulfate and prostaglandin E2, at the plasma membrane. Responsible for intestinal absorption of bile acids. Capable of thyroid hormone transport (both T3 or 3,3',5'-triiodo-L-thyronine, and T4 or L-tyroxine). Plays roles in blood-brain and -cerebrospinal fluid barrier transport of organic anions and signal mediators, and in hormone uptake by neural cells. May also play a role in the reuptake of neuropeptides such as substance P/TAC1 and vasoactive intestinal peptide/VIP released from retinal neurons. Shows a pH-sensitive substrate specificity which may be ascribed to the protonation state of the binding site and leads to a stimulation of substrate transport in an acidic microenvironment. Hydrogencarbonate/HCO3(-) acts as the probable counteranion that exchanges for organic anions. May contribute to regulate the transport of organic compounds in testis across the blood-testis-barrier. This is Solute carrier organic anion transporter family member 1A5 (Slco1a5) from Mus musculus (Mouse).